The chain runs to 1278 residues: SMC5-SMC6 complex localization factor protein 2 (1278 aa).

Disordered regions lie at residues 1–235, 248–337, 443–491, and 509–582; these read MTRR…LGAR, EQKK…KRTE, RINS…FIRH, and EPED…KETK. The span at 39-50 shows a compositional bias: basic and acidic residues; that stretch reads KRTESPGDRKQS. A compositionally biased stretch (basic residues) spans 94 to 103; the sequence is SSPKKLKPKR. Basic and acidic residues-rich tracts occupy residues 118–133, 156–174, 180–199, and 248–258; these read GGKE…ESRR, LPKE…ERRK, ESNR…DSRK, and EQKKLRKEQME. 2 stretches are compositionally biased toward polar residues: residues 259–277 and 318–329; these read QRIN…SLKS and SDSWELSGSKQN. Basic and acidic residues-rich tracts occupy residues 449-463 and 469-489; these read KEQR…KSTK and KARE…EKFI. Residues 519 to 540 show a composition bias toward polar residues; it reads ADSAPSNAGHHSSRNSDQVHSA. A Phosphoserine modification is found at Ser-591. Disordered stretches follow at residues 598 to 724, 739 to 764, and 798 to 820; these read PLNA…EEEE, RTPT…MKEY, and IRQG…DDGD. Basic and acidic residues predominate over residues 609–630; that stretch reads PKKDKERSSSKERSGHSTESSK. Low complexity-rich tracts occupy residues 643–654, 666–675, and 688–697; these read SNESSGKNSGGS, PPAALEVVPS, and SGNSNAGSNA. Acidic residues predominate over residues 707-724; the sequence is DSDEESLGYTLESDEEEE. Ser-708, Ser-712, and Ser-719 each carry phosphoserine. Residues 740-1278 form an interaction with SIMC1 region; it reads TPTTSGKPPA…QLHDFWVPDS (539 aa). An NSE6-like domain region spans residues 769-1271; sequence TYTNTLERLV…NCRPTQGQLH (503 aa). Positions 807-1278 are required for interaction with SLF1 and RAD18; sequence PLRTGDQDST…QLHDFWVPDS (472 aa).

It belongs to the FAM178 family. In terms of assembly, forms a heterodimer with SIMC1. Interacts with SLF1 (via N-terminus); this interaction links RAD18 to the SMC5-SMC6 complex. Interacts with RAD18; this interaction is increased in a SLF1-dependent manner. Interacts with SMC5 and SMC6.

Its subcellular location is the nucleus. It localises to the PML body. Plays a role in the DNA damage response (DDR) pathway by regulating postreplication repair of UV-damaged DNA and genomic stability maintenance. The SLF1-SLF2 complex acts to link RAD18 with the SMC5-SMC6 complex at replication-coupled interstrand cross-links (ICL) and DNA double-strand breaks (DSBs) sites on chromatin during DNA repair in response to stalled replication forks. Promotes the recruitment of the SMC5-SMC6 complex to DNA lesions. May play a role in SMC5-SMC6 complex recruitment for viral restriction. Forms a complex with SIMC1 and this complex is required to recruit SMC5-SMC6 complex to PML nuclear bodies and sites of viral replication. The polypeptide is SMC5-SMC6 complex localization factor protein 2 (Mus musculus (Mouse)).